Reading from the N-terminus, the 471-residue chain is Putative multidrug resistance protein MdtD (471 aa).

Residues 1–11 (MTDLPDSTRWQ) lie on the Periplasmic side of the membrane. Residues 12 to 32 (LWIVAFGFFMQSLDTTIVNTA) form a helical membrane-spanning segment. The Cytoplasmic segment spans residues 33 to 48 (LPSMAQSLGESPLHMH). The chain crosses the membrane as a helical span at residues 49–69 (MVIVSYVLTVAVMLPASGWLA). Over 70–76 (DKVGVRN) the chain is Periplasmic. The helical transmembrane segment at 77 to 97 (IFFTAIVLFTLGSLFCALSGT) threads the bilayer. Topologically, residues 98-101 (LNEL) are cytoplasmic. The chain crosses the membrane as a helical span at residues 102 to 124 (LLARALQGVGGAMMVPVGRLTVM). The Periplasmic segment spans residues 125–137 (KIVPREQYMAAMT). Residues 138 to 158 (FVTLPGQVGPLLGPALGGLLV) form a helical membrane-spanning segment. The Cytoplasmic portion of the chain corresponds to 159 to 164 (EYASWH). Residues 165-185 (WIFLINIPVGIIGAIATLMLM) traverse the membrane as a helical segment. The Periplasmic segment spans residues 186–196 (PNYTMQTRRFD). A helical membrane pass occupies residues 197 to 217 (LSGFLLLAVGMAVLTLALDGS). The Cytoplasmic portion of the chain corresponds to 218–224 (KGTGLSP). Residues 225 to 245 (LAIAGLVAVGVVALVLYLLHA) traverse the membrane as a helical segment. At 246–262 (RNNNRALFSLKLFRTRT) the chain is on the periplasmic side. A helical transmembrane segment spans residues 263 to 283 (FSLGLAGSFAGRIGSGMLPFM). At 284–285 (TP) the chain is on the cytoplasmic side. A helical membrane pass occupies residues 286–306 (VFLQIGLGFSPFHAGLMMIPM). At 307 to 341 (VLGSMGMKRIVVQVVNRFGYRRVLVATTLGLSLVT) the chain is on the periplasmic side. The helical transmembrane segment at 342-362 (LLFMTTALLGWYYVLPFVLFL) threads the bilayer. Topologically, residues 363 to 395 (QGMVNSTRFSSMNTLTLKDLPDNLASSGNSLLS) are cytoplasmic. The helical transmembrane segment at 396-416 (MIMQLSMSIGVTIAGLLLGLF) threads the bilayer. The Periplasmic portion of the chain corresponds to 417-430 (GSQHVSVDSGTTQT). A helical membrane pass occupies residues 431-451 (VFMYTWLSMAFIIALPAFIFA). Residues 452–471 (RVPNDTHQNVAISRRKRSAQ) lie on the Cytoplasmic side of the membrane.

This sequence belongs to the major facilitator superfamily. TCR/Tet family.

It localises to the cell inner membrane. The chain is Putative multidrug resistance protein MdtD from Escherichia coli (strain SMS-3-5 / SECEC).